The chain runs to 229 residues: Large ribosomal subunit protein uL1 (229 aa).

The protein belongs to the universal ribosomal protein uL1 family. In terms of assembly, part of the 50S ribosomal subunit.

Its function is as follows. Binds directly to 23S rRNA. The L1 stalk is quite mobile in the ribosome, and is involved in E site tRNA release. Functionally, protein L1 is also a translational repressor protein, it controls the translation of the L11 operon by binding to its mRNA. This is Large ribosomal subunit protein uL1 from Streptococcus gordonii (strain Challis / ATCC 35105 / BCRC 15272 / CH1 / DL1 / V288).